Reading from the N-terminus, the 362-residue chain is UDP-N-acetylglucosamine--N-acetylmuramyl-(pentapeptide) pyrophosphoryl-undecaprenol N-acetylglucosamine transferase (362 aa).

Residues 14–16, R170, S199, and Q289 contribute to the UDP-N-acetyl-alpha-D-glucosamine site; that span reads TGG.

Belongs to the glycosyltransferase 28 family. MurG subfamily.

It localises to the cell inner membrane. The enzyme catalyses di-trans,octa-cis-undecaprenyl diphospho-N-acetyl-alpha-D-muramoyl-L-alanyl-D-glutamyl-meso-2,6-diaminopimeloyl-D-alanyl-D-alanine + UDP-N-acetyl-alpha-D-glucosamine = di-trans,octa-cis-undecaprenyl diphospho-[N-acetyl-alpha-D-glucosaminyl-(1-&gt;4)]-N-acetyl-alpha-D-muramoyl-L-alanyl-D-glutamyl-meso-2,6-diaminopimeloyl-D-alanyl-D-alanine + UDP + H(+). Its pathway is cell wall biogenesis; peptidoglycan biosynthesis. Cell wall formation. Catalyzes the transfer of a GlcNAc subunit on undecaprenyl-pyrophosphoryl-MurNAc-pentapeptide (lipid intermediate I) to form undecaprenyl-pyrophosphoryl-MurNAc-(pentapeptide)GlcNAc (lipid intermediate II). The protein is UDP-N-acetylglucosamine--N-acetylmuramyl-(pentapeptide) pyrophosphoryl-undecaprenol N-acetylglucosamine transferase of Borrelia turicatae (strain 91E135).